The sequence spans 431 residues: Serine hydroxymethyltransferase (431 aa).

121–123 (AHV) contributes to the (6S)-5,6,7,8-tetrahydrofolate binding site. The residue at position 227 (Lys-227) is an N6-(pyridoxal phosphate)lysine.

The protein belongs to the SHMT family. In terms of assembly, homodimer. The cofactor is pyridoxal 5'-phosphate.

The protein resides in the cytoplasm. Its pathway is amino-acid biosynthesis; glycine biosynthesis; glycine from L-serine: step 1/1. Functionally, catalyzes the reversible interconversion of serine and glycine with a modified folate serving as the one-carbon carrier. Also exhibits a pteridine-independent aldolase activity toward beta-hydroxyamino acids, producing glycine and aldehydes, via a retro-aldol mechanism. The chain is Serine hydroxymethyltransferase from Metallosphaera sedula (strain ATCC 51363 / DSM 5348 / JCM 9185 / NBRC 15509 / TH2).